Consider the following 75-residue polypeptide: Putative membrane protein insertion efficiency factor (75 aa).

It belongs to the UPF0161 family.

The protein localises to the cell membrane. Could be involved in insertion of integral membrane proteins into the membrane. This Halalkalibacterium halodurans (strain ATCC BAA-125 / DSM 18197 / FERM 7344 / JCM 9153 / C-125) (Bacillus halodurans) protein is Putative membrane protein insertion efficiency factor.